Reading from the N-terminus, the 359-residue chain is Chorismate synthase (359 aa).

Arginine 47 is an NADP(+) binding site. Residues 123-125 (RSS), glycine 283, 298-302 (KPTSS), and arginine 326 each bind FMN.

It belongs to the chorismate synthase family. In terms of assembly, homotetramer. FMNH2 is required as a cofactor.

The enzyme catalyses 5-O-(1-carboxyvinyl)-3-phosphoshikimate = chorismate + phosphate. Its pathway is metabolic intermediate biosynthesis; chorismate biosynthesis; chorismate from D-erythrose 4-phosphate and phosphoenolpyruvate: step 7/7. Functionally, catalyzes the anti-1,4-elimination of the C-3 phosphate and the C-6 proR hydrogen from 5-enolpyruvylshikimate-3-phosphate (EPSP) to yield chorismate, which is the branch point compound that serves as the starting substrate for the three terminal pathways of aromatic amino acid biosynthesis. This reaction introduces a second double bond into the aromatic ring system. This chain is Chorismate synthase, found in Chlamydia pneumoniae (Chlamydophila pneumoniae).